The sequence spans 419 residues: MTTVSAIGALVALIVAIFLILKKVSPAYGMLVGALVGGLIGGADLSQTVSLMIGGAQGITTAVMRILAAGVLAGVLIESGAANSITETITNKLGETRALLALALATMILTAVGVFVDVAVITVSPIALALSRRSDLSKAAILLAMIGGGKAGNIMSPNPNAIAAADTFHLPLTSVMMAGIIPALFGLILTYFLAKRLINKGSKVTDKEVIVLETQNLPSFLTALVAPLVAILLLALRPLFDIKVDPLIALPLGGLIGAFCMGKLRNINSYAINGLSKMTPVAIMLLGTGALAGIIANSGLKEVLIQGLEHSGLPSYILAPISGVLMSLATASTTAGTAVASNVFSSTLLELGVSSLAGAAMIHAGATVFDHMPHGSFFHATGGSVNMDIKERLKLIPYESAVGLMMTIVSTLIFGVFKF.

11 helical membrane passes run 1–21 (MTTV…FLIL), 24–44 (VSPA…GGAD), 66–86 (ILAA…NSIT), 101–121 (ALAL…VAVI), 174–194 (SVMM…YFLA), 216–236 (NLPS…LLAL), 242–262 (IKVD…FCMG), 280–300 (PVAI…NSGL), 311–331 (SGLP…LATA), 349–369 (LELG…ATVF), and 396–416 (IPYE…IFGV).

The protein belongs to the CitM (TC 2.A.11) transporter family.

It localises to the cell membrane. This is an uncharacterized protein from Haemophilus influenzae (strain ATCC 51907 / DSM 11121 / KW20 / Rd).